Here is a 502-residue protein sequence, read N- to C-terminus: Glycerol kinase (502 aa).

Thr12 lines the ADP pocket. 3 residues coordinate ATP: Thr12, Thr13, and Ser14. Thr12 provides a ligand contact to sn-glycerol 3-phosphate. Arg16 is a binding site for ADP. Positions 82, 83, 134, and 243 each coordinate sn-glycerol 3-phosphate. Glycerol is bound by residues Arg82, Glu83, Tyr134, Asp243, and Gln244. ADP is bound by residues Thr265 and Gly308. Thr265, Gly308, Gln312, and Gly412 together coordinate ATP. Gly412 is a binding site for ADP.

It belongs to the FGGY kinase family.

The enzyme catalyses glycerol + ATP = sn-glycerol 3-phosphate + ADP + H(+). It participates in polyol metabolism; glycerol degradation via glycerol kinase pathway; sn-glycerol 3-phosphate from glycerol: step 1/1. Inhibited by fructose 1,6-bisphosphate (FBP). Its function is as follows. Key enzyme in the regulation of glycerol uptake and metabolism. Catalyzes the phosphorylation of glycerol to yield sn-glycerol 3-phosphate. The chain is Glycerol kinase from Methylobacterium nodulans (strain LMG 21967 / CNCM I-2342 / ORS 2060).